Here is a 130-residue protein sequence, read N- to C-terminus: Large ribosomal subunit protein bL12 (130 aa).

Belongs to the bacterial ribosomal protein bL12 family. In terms of assembly, homodimer. Part of the ribosomal stalk of the 50S ribosomal subunit. Forms a multimeric L10(L12)X complex, where L10 forms an elongated spine to which 2 to 4 L12 dimers bind in a sequential fashion. Binds GTP-bound translation factors.

In terms of biological role, forms part of the ribosomal stalk which helps the ribosome interact with GTP-bound translation factors. Is thus essential for accurate translation. The polypeptide is Large ribosomal subunit protein bL12 (Synechococcus sp. (strain RCC307)).